A 136-amino-acid polypeptide reads, in one-letter code: Small ribosomal subunit protein uS9 (136 aa).

This sequence belongs to the universal ribosomal protein uS9 family.

The polypeptide is Small ribosomal subunit protein uS9 (Borreliella burgdorferi (strain ZS7) (Borrelia burgdorferi)).